The primary structure comprises 285 residues: Troponin T, cardiac muscle (285 aa).

Positions 1 to 58 (MSDVEEAVEEYEEQEEAAEEEHEEAVEEEAGGEAEAGEPCTAEDGEEEEGREAEDGPV) are enriched in acidic residues. Disordered regions lie at residues 1-83 (MSDV…GERV) and 111-206 (RKKE…EKKK). Position 2 is an N-acetylserine (Ser2). Phosphoserine; by CK2 is present on Ser2. The segment covering 66 to 77 (RPFMPNLVPPKI) has biased composition (pro residues). Composition is skewed to basic and acidic residues over residues 111–171 (RKKE…DEAR) and 190–206 (QTER…EKKK). Residue Thr191 is modified to Phosphothreonine; by PKC/PRKCA. Ser195 is modified (phosphoserine; by PKC/PRKCA). Residue Thr200 is modified to Phosphothreonine; by PKC/PRKCA and RAF1. A Phosphothreonine; by PKC/PRKCA modification is found at Thr281.

It belongs to the troponin T family. Post-translationally, the N-terminus is blocked. In terms of processing, phosphorylation at Thr-200 by PRKCA induces significant reduction in myofilament calcium sensitivity and actomyosin ATPase activity.

In terms of biological role, troponin T is the tropomyosin-binding subunit of troponin, the thin filament regulatory complex which confers calcium-sensitivity to striated muscle actomyosin ATPase activity. This is Troponin T, cardiac muscle (TNNT2) from Bos taurus (Bovine).